The chain runs to 312 residues: Large ribosomal subunit protein uL15m (312 aa).

The interval 63–89 (RIRKGRGPSSGYGKTAGRGTKGQKAHG) is disordered. Residues 70–82 (PSSGYGKTAGRGT) show a composition bias toward gly residues.

This sequence belongs to the universal ribosomal protein uL15 family. As to quaternary structure, component of the mitochondrial large ribosomal subunit (mt-LSU). Mature N.crassa 74S mitochondrial ribosomes consist of a small (37S) and a large (54S) subunit. The 37S small subunit contains a 16S ribosomal RNA (16S mt-rRNA) and 32 different proteins. The 54S large subunit contains a 23S rRNA (23S mt-rRNA) and 42 different proteins.

The protein localises to the mitochondrion. Its function is as follows. Component of the mitochondrial ribosome (mitoribosome), a dedicated translation machinery responsible for the synthesis of mitochondrial genome-encoded proteins, including at least some of the essential transmembrane subunits of the mitochondrial respiratory chain. The mitoribosomes are attached to the mitochondrial inner membrane and translation products are cotranslationally integrated into the membrane. The polypeptide is Large ribosomal subunit protein uL15m (mrpl10) (Neurospora crassa (strain ATCC 24698 / 74-OR23-1A / CBS 708.71 / DSM 1257 / FGSC 987)).